A 216-amino-acid chain; its full sequence is Large ribosomal subunit protein uL24m (216 aa).

A mitochondrion-targeting transit peptide spans Met1–Met9. The KOW domain occupies Val56–Glu89. The disordered stretch occupies residues Pro167–Thr186.

It belongs to the universal ribosomal protein uL24 family. In terms of assembly, component of the mitochondrial ribosome large subunit (39S) which comprises a 16S rRNA and about 50 distinct proteins.

The protein localises to the mitochondrion. The chain is Large ribosomal subunit protein uL24m (mrpl24) from Danio rerio (Zebrafish).